The primary structure comprises 236 residues: ATP synthase subunit a (236 aa).

5 consecutive transmembrane segments (helical) span residues 17-37, 80-100, 114-134, 179-199, and 208-228; these read LANVLMITVTSVIVFVIAVLA, MTLIMYIFVANMLGLPFSVVI, VVTLTLATMVVALSHYYGIKL, ILLALLAGSLATGVGGTIAAI, and FSIFVGAIQAFIFTMLTMVYM.

This sequence belongs to the ATPase A chain family. As to quaternary structure, F-type ATPases have 2 components, CF(1) - the catalytic core - and CF(0) - the membrane proton channel. CF(1) has five subunits: alpha(3), beta(3), gamma(1), delta(1), epsilon(1). CF(0) has three main subunits: a(1), b(2) and c(9-12). The alpha and beta chains form an alternating ring which encloses part of the gamma chain. CF(1) is attached to CF(0) by a central stalk formed by the gamma and epsilon chains, while a peripheral stalk is formed by the delta and b chains.

It is found in the cell membrane. Its function is as follows. Key component of the proton channel; it plays a direct role in the translocation of protons across the membrane. The sequence is that of ATP synthase subunit a from Anoxybacillus flavithermus (strain DSM 21510 / WK1).